A 110-amino-acid polypeptide reads, in one-letter code: Phosphoribosyl-AMP cyclohydrolase (110 aa).

Asp-80 is a binding site for Mg(2+). Position 81 (Cys-81) interacts with Zn(2+). Mg(2+) is bound by residues Asp-82 and Asp-84. Positions 97 and 104 each coordinate Zn(2+).

This sequence belongs to the PRA-CH family. In terms of assembly, homodimer. It depends on Mg(2+) as a cofactor. Zn(2+) is required as a cofactor.

The protein resides in the cytoplasm. The catalysed reaction is 1-(5-phospho-beta-D-ribosyl)-5'-AMP + H2O = 1-(5-phospho-beta-D-ribosyl)-5-[(5-phospho-beta-D-ribosylamino)methylideneamino]imidazole-4-carboxamide. The protein operates within amino-acid biosynthesis; L-histidine biosynthesis; L-histidine from 5-phospho-alpha-D-ribose 1-diphosphate: step 3/9. Catalyzes the hydrolysis of the adenine ring of phosphoribosyl-AMP. In Clostridium botulinum (strain ATCC 19397 / Type A), this protein is Phosphoribosyl-AMP cyclohydrolase.